Here is an 84-residue protein sequence, read N- to C-terminus: Exodeoxyribonuclease 7 small subunit (84 aa).

This sequence belongs to the XseB family. As to quaternary structure, heterooligomer composed of large and small subunits.

It localises to the cytoplasm. It catalyses the reaction Exonucleolytic cleavage in either 5'- to 3'- or 3'- to 5'-direction to yield nucleoside 5'-phosphates.. Its function is as follows. Bidirectionally degrades single-stranded DNA into large acid-insoluble oligonucleotides, which are then degraded further into small acid-soluble oligonucleotides. This Bartonella bacilliformis (strain ATCC 35685 / KC583 / Herrer 020/F12,63) protein is Exodeoxyribonuclease 7 small subunit.